A 169-amino-acid polypeptide reads, in one-letter code: Interleukin-25 (169 aa).

The signal sequence occupies residues 1 to 16 (MYQAVAFLAMIVGTHT). The disordered stretch occupies residues 47 to 70 (SSASVSPPEPLSHTHHAESCRASK). Over residues 61 to 70 (HHAESCRASK) the composition is skewed to basic and acidic residues. Cystine bridges form between C102-C160 and C107-C162. A glycan (N-linked (GlcNAc...) asparagine) is linked at N128.

This sequence belongs to the IL-17 family.

The protein localises to the secreted. In terms of biological role, cytokine produced by various cells such as eosinophils, T-helper type 2 (Th2) cells or epithelial cells that plays a role in internal safety of adaptive immune responses by regulating cytokine production. Promotes and augments T-helper type 2 responses locally or systemically. Exerts its activity via its receptor composed of IL17RA and IL17RB for signal transduction. In turn, stimulates the JAK2-STAT5A pathway and promotes the secretion of type-2 associated cytokines including IL4, IL9 and IL13. Also induces the release of IL8, and IL6 from eosinophils through the combined activation of MAPK and NF-kappa-B pathways. Inhibits the differentiation of T-helper (Th17) cells via the production of IL4, IL5 and IL13. The polypeptide is Interleukin-25 (Il25) (Mus musculus (Mouse)).